We begin with the raw amino-acid sequence, 288 residues long: Protease HtpX (288 aa).

The next 2 membrane-spanning stretches (helical) occupy residues 4 to 24 (ILLFLATNFAVLFVFNIILTL) and 33 to 53 (VGLLIFATLFGFTGSIISLLM). H139 lines the Zn(2+) pocket. The active site involves E140. H143 provides a ligand contact to Zn(2+). The next 2 helical transmembrane spans lie at 146 to 166 (SGDMVTMTLLQGVLNTFVIFI) and 186 to 206 (IYFMISMVLELVFGVLASMIA). E214 provides a ligand contact to Zn(2+).

This sequence belongs to the peptidase M48B family. Zn(2+) serves as cofactor.

Its subcellular location is the cell inner membrane. This Histophilus somni (strain 2336) (Haemophilus somnus) protein is Protease HtpX.